A 284-amino-acid polypeptide reads, in one-letter code: 4-diphosphocytidyl-2-C-methyl-D-erythritol kinase (284 aa).

K14 is an active-site residue. Residue 98-108 (PMGGGLGGGSS) coordinates ATP. The active site involves D140.

This sequence belongs to the GHMP kinase family. IspE subfamily.

It carries out the reaction 4-CDP-2-C-methyl-D-erythritol + ATP = 4-CDP-2-C-methyl-D-erythritol 2-phosphate + ADP + H(+). It functions in the pathway isoprenoid biosynthesis; isopentenyl diphosphate biosynthesis via DXP pathway; isopentenyl diphosphate from 1-deoxy-D-xylulose 5-phosphate: step 3/6. In terms of biological role, catalyzes the phosphorylation of the position 2 hydroxy group of 4-diphosphocytidyl-2C-methyl-D-erythritol. This Shewanella halifaxensis (strain HAW-EB4) protein is 4-diphosphocytidyl-2-C-methyl-D-erythritol kinase.